Here is a 413-residue protein sequence, read N- to C-terminus: DNA primase large subunit PriL (413 aa).

[4Fe-4S] cluster is bound by residues cysteine 230, cysteine 301, cysteine 310, and cysteine 317. Basic and acidic residues-rich tracts occupy residues 340–356, 362–381, and 388–413; these read MEKE…QEEK, KEKQ…EEKG, and KKRE…KKRI. A disordered region spans residues 340–413; it reads MEKEKEEKEE…KEKQEEKKRI (74 aa).

Belongs to the eukaryotic-type primase large subunit family. In terms of assembly, heterodimer of a small subunit (PriS) and a large subunit (PriL). [4Fe-4S] cluster is required as a cofactor.

Its function is as follows. Regulatory subunit of DNA primase, an RNA polymerase that catalyzes the synthesis of short RNA molecules used as primers for DNA polymerase during DNA replication. Stabilizes and modulates the activity of the small subunit, increasing the rate of DNA synthesis, and conferring RNA synthesis capability. The DNA polymerase activity may enable DNA primase to also catalyze primer extension after primer synthesis. May also play a role in DNA repair. This Methanosarcina barkeri (strain Fusaro / DSM 804) protein is DNA primase large subunit PriL.